A 615-amino-acid chain; its full sequence is Filament-like plant protein 3 (615 aa).

Residues 1–18 (MDRRSWLWRRKSSEKSPG) show a composition bias toward basic and acidic residues. A disordered region spans residues 1 to 55 (MDRRSWLWRRKSSEKSPGETESTGSVSSHSERFSDDQRSQSPELNSKPVTREEEA). Residues 19–28 (ETESTGSVSS) are compositionally biased toward polar residues. Positions 29-38 (HSERFSDDQR) are enriched in basic and acidic residues. The segment covering 39–48 (SQSPELNSKP) has biased composition (polar residues). 2 coiled-coil regions span residues 87 to 121 (AEEA…LEDR) and 148 to 211 (EEAI…KSEE). Disordered regions lie at residues 258 to 289 (DNSS…SPSE) and 319 to 343 (PHSE…HVNQ). Residues 262–288 (DLKSSIDNQSDYSGRVSFSDNEMQSPS) show a composition bias toward polar residues. A compositionally biased stretch (basic and acidic residues) spans 322 to 343 (EPGRKHSESNKELEKSNAHVNQ). Residues 327-563 (HSESNKELEK…KQELEHHQET (237 aa)) adopt a coiled-coil conformation.

This sequence belongs to the FPP family. Interacts with WPP/MAF proteins. Binds to COG2; this interaction promotes the association between cortical microtubules and EXO70A1. In terms of tissue distribution, accumulates in preferentially xylem cells.

It is found in the vesicle. Functionally, ensures, when in complex with COG2 and FPP2/VETH2, the correct secondary cell wall (SCW) deposition pattern by recruiting exocyst components to cortical microtubules in xylem cells during secondary cell wall deposition by recruiting EXO70A1. The chain is Filament-like plant protein 3 from Arabidopsis thaliana (Mouse-ear cress).